A 289-amino-acid chain; its full sequence is Metal-staphylopine import system permease protein CntC (289 aa).

The next 5 membrane-spanning stretches (helical) occupy residues alanine 13–valine 33, leucine 77–leucine 97, valine 115–glycine 135, isoleucine 194–phenylalanine 214, and isoleucine 249–isoleucine 269. One can recognise an ABC transmembrane type-1 domain in the interval isoleucine 73–serine 262.

The protein belongs to the binding-protein-dependent transport system permease family. The complex is composed of two ATP-binding proteins (CntD and CntF), two transmembrane proteins (CntB and CntC) and a solute-binding protein (CntA).

Its subcellular location is the cell membrane. With respect to regulation, nickel/cobalt import is reduced in the presence of zinc. Functionally, part of the ABC transporter complex CntABCDF (Opp1) involved in the uptake of metal in complex with the metallophore staphylopine (StP). Involved in the import of divalent metals ions such as nickel, cobalt and zinc. Probably responsible for the translocation of the substrate across the membrane. Plays a major role in nickel/cobalt import in zinc-depleted conditions. Contributes to virulence. Required for full urease activity in vitro. This chain is Metal-staphylopine import system permease protein CntC, found in Staphylococcus aureus (strain NCTC 8325 / PS 47).